Reading from the N-terminus, the 227-residue chain is Guanylate kinase (227 aa).

The 179-residue stretch at 21–199 folds into the Guanylate kinase-like domain; it reads GNLFMVVAPS…ALAELECIVA (179 aa). 28-35 is a binding site for ATP; sequence APSGAGKS.

This sequence belongs to the guanylate kinase family.

Its subcellular location is the cytoplasm. The catalysed reaction is GMP + ATP = GDP + ADP. Essential for recycling GMP and indirectly, cGMP. This Burkholderia thailandensis (strain ATCC 700388 / DSM 13276 / CCUG 48851 / CIP 106301 / E264) protein is Guanylate kinase.